The chain runs to 253 residues: tRNA1(Val) (adenine(37)-N6)-methyltransferase (253 aa).

It belongs to the methyltransferase superfamily. tRNA (adenine-N(6)-)-methyltransferase family.

The protein resides in the cytoplasm. The catalysed reaction is adenosine(37) in tRNA1(Val) + S-adenosyl-L-methionine = N(6)-methyladenosine(37) in tRNA1(Val) + S-adenosyl-L-homocysteine + H(+). Specifically methylates the adenine in position 37 of tRNA(1)(Val) (anticodon cmo5UAC). The sequence is that of tRNA1(Val) (adenine(37)-N6)-methyltransferase from Dickeya chrysanthemi (strain Ech1591) (Dickeya zeae (strain Ech1591)).